Here is a 2545-residue protein sequence, read N- to C-terminus: Methylphloroacetophenone synthase (2545 aa).

The segment at 8-261 (AFGALAPWPA…HVAIHEGIPQ (254 aa)) is N-terminal acylcarrier protein transacylase (SAT) domain. One can recognise a Ketosynthase family 3 (KS3) domain in the interval 383–798 (KDAIAIIGMG…GSNAAMIVLE (416 aa)). Residues C547, H682, and H721 each act as for beta-ketoacyl synthase activity in the active site. Residues 914–1218 (LCFGGQVSDR…VSLQLNKPNS (305 aa)) are malonyl-CoA:ACP transacylase (MAT) domain. S1001 functions as the For acyl/malonyl transferase activity in the catalytic mechanism. An N-terminal hotdog fold region spans residues 1293-1423 (LPAVLIRLKS…GTVNLKVADD (131 aa)). In terms of domain architecture, PKS/mFAS DH spans 1293–1605 (LPAVLIRLKS…FTDIRRPVPI (313 aa)). A product template (PT) domain region spans residues 1296 to 1604 (VLIRLKSFDS…NFTDIRRPVP (309 aa)). Positions 1449-1605 (RSESLRGNVL…FTDIRRPVPI (157 aa)) are C-terminal hotdog fold. In terms of domain architecture, Carrier spans 1657–1731 (TSIYEDICGL…SLVDYLHGKG (75 aa)). S1691 carries the O-(pantetheine 4'-phosphoryl)serine modification. Over residues 1748-1768 (SSSHAISTGASSPPDSSGASA) the composition is skewed to low complexity. A disordered region spans residues 1748–1773 (SSSHAISTGASSPPDSSGASAMTTPP). Residues 1931 to 2163 (FGASETKLLN…GFKHVSWTDG (233 aa)) form a methyltransferase (CMeT) domain region. The claisen cyclase (CLC) domain stretch occupies residues 2198–2544 (AGVPMEEVVW…YDFICRQLGM (347 aa)). Residues S2321, D2481, and H2513 each act as for thioesterase activity in the active site.

In terms of biological role, methylphloroacetophenone synthase; part of the gene cluster that mediates the biosynthesis of usnic acid, a dibenzofuran lichen product possessing a broad spectrum of biological activities. Two genes, mpas and mpao, comprise the usnic acid biosynthetic gene cluster with a single post-PKS enzyme, the methylphloracetophenone oxidase (mpao). The methylphloroacetophenone synthase (mpas) is a non-reducing polyketide synthase that produces methylphloracetophenone from acetate via a methylated tetraketide intermediate. The methylphloroacetophenone oxidase then carries out the oxidative dimerization of methylphloracetophenone to usnic acid. This chain is Methylphloroacetophenone synthase, found in Cladonia uncialis (Cup lichen).